A 1286-amino-acid chain; its full sequence is CLIP-associating protein 2 (1286 aa).

The interval 1 to 40 is golgi localization; the sequence is MRRLICKRICDYKSFDDEESVDGNRPSSAASAFKVPAPKT. Residues Ser14 and Ser20 each carry the phosphoserine modification. Residues 17–67 are disordered; the sequence is DEESVDGNRPSSAASAFKVPAPKTPGNPVSSARKPGSAGGPKVGGPSKEGG. Over residues 53–67 the composition is skewed to gly residues; sequence SAGGPKVGGPSKEGG. The interval 66–317 is TOG 1; the sequence is GGAGAVDEDD…KSLQTYLKSS (252 aa). HEAT repeat units lie at residues 179–214, 215–251, and 256–293; these read HGAE…IRHT, HVPR…EWQT, and RHAA…HFPG. The segment at 320–374 is disordered; that stretch reads VASLPQSDRSSSSSQESLNRPFSSKWSTANPSTVAGRVSVGGSKANPLPGSLQRS. Ser322, Ser333, and Ser336 each carry phosphoserine. The span at 322–340 shows a compositional bias: low complexity; it reads SLPQSDRSSSSSQESLNRP. The segment covering 341–352 has biased composition (polar residues); that stretch reads FSSKWSTANPST. Residues Ser374, Ser376, and Ser413 each carry the phosphoserine modification. Residues 411–473 are disordered; sequence YASLEDTSDK…GSRSGSPGRV (63 aa). Residues 417-431 show a composition bias toward basic and acidic residues; that stretch reads TSDKMDGTASDDGRV. The tract at residues 450-565 is interaction with microtubules, MAPRE1 and MAPRE3; the sequence is RGRSRTKMVS…GPGYGISQSS (116 aa). Positions 459–473 are enriched in low complexity; it reads SQSQPGSRSGSPGRV. Phosphoserine is present on residues Ser461, Ser465, Ser469, Ser484, and Ser495. The tract at residues 493 to 564 is disordered; sequence SASAQKRSKI…LGPGYGISQS (72 aa). An SXIP motif 1; mediates interaction with MAPRE1 and targeting to microtubule plus ends motif is present at residues 500–503; that stretch reads SKIP. Ser513 carries the phosphoserine modification. The SXIP motif 2; mediates interaction with MAPRE1 and targeting to microtubule plus ends motif lies at 523–526; it reads SRIP. A phosphoserine mark is found at Ser531, Ser535, Ser570, Ser572, Ser581, Ser614, and Ser620. The segment covering 605–616 has biased composition (basic and acidic residues); that stretch reads RRYESYGMHSDD. Positions 605–638 are disordered; it reads RRYESYGMHSDDDANSDASSACSERSYSSRNGSI. Positions 620–634 are enriched in low complexity; that stretch reads SDASSACSERSYSSR. The tract at residues 642 to 873 is TOG 2; it reads MRQTEDVAEV…TKLLHNHLRN (232 aa). HEAT repeat units lie at residues 702 to 739 and 764 to 801; these read KVFS…KMGA and LQFN…QMDP. Phosphothreonine is present on Thr779. The tract at residues 864 to 1286 is interaction with RSN and localization to the Golgi and kinetochores; it reads TKLLHNHLRN…DPTADVSGQS (423 aa). Disordered stretches follow at residues 870-920 and 944-989; these read HLRN…FDYD and SFRS…SQPA. Composition is skewed to polar residues over residues 872 to 884 and 893 to 914; these read RNTG…SMGS and SPAN…TLSP. Ser884 bears the Phosphoserine mark. Residues Ser944, Ser947, Ser1005, and Ser1021 each carry the phosphoserine modification. A compositionally biased stretch (basic and acidic residues) spans 947–964; that stretch reads SQEDMSEPVRRDPKKEDG. The required for cortical localization stretch occupies residues 1009 to 1286; it reads RDYNPYNYSD…DPTADVSGQS (278 aa). HEAT repeat units lie at residues 1046–1083, 1090–1127, and 1208–1245; these read LDHS…TQEE, EHFK…HQPA, and MLLP…VIGD.

It belongs to the CLASP family. As to quaternary structure, interacts with microtubules. Interacts with MAPRE1; probably required for targeting to growing microtubule plus ends. Interacts with ERC1, MAPRE3 and PHLDB2. The interaction with ERC1 may be mediated by PHLDB2. Interacts with GCC2; recruits CLASP2 to Golgi membranes. Interacts with CLIP2 and RSN. Interacts with MACF1. Interacts with mtcl2. Interacts with MTCL1. Post-translationally, phosphorylated by GSK3B. Phosphorylation by GSK3B may negatively regulate binding to microtubule lattices in lamella. Isoform 2 is phosphorylated on Ser-241. As to expression, highly expressed in brain and at low levels in heart, kidney and lung.

It localises to the cytoplasm. The protein resides in the cytoskeleton. It is found in the microtubule organizing center. The protein localises to the centrosome. Its subcellular location is the chromosome. It localises to the centromere. The protein resides in the kinetochore. It is found in the spindle. The protein localises to the spindle pole. Its subcellular location is the golgi apparatus. It localises to the trans-Golgi network. The protein resides in the cell membrane. It is found in the cell projection. The protein localises to the ruffle membrane. Its subcellular location is the cell cortex. Its function is as follows. Microtubule plus-end tracking protein that promotes the stabilization of dynamic microtubules. Involved in the nucleation of noncentrosomal microtubules originating from the trans-Golgi network (TGN). Required for the polarization of the cytoplasmic microtubule arrays in migrating cells towards the leading edge of the cell. May act at the cell cortex to enhance the frequency of rescue of depolymerizing microtubules by attaching their plus-ends to cortical platforms composed of ERC1 and PHLDB2. This cortical microtubule stabilizing activity is regulated at least in part by phosphatidylinositol 3-kinase signaling. Also performs a similar stabilizing function at the kinetochore which is essential for the bipolar alignment of chromosomes on the mitotic spindle. Acts as a mediator of ERBB2-dependent stabilization of microtubules at the cell cortex. The polypeptide is CLIP-associating protein 2 (Clasp2) (Mus musculus (Mouse)).